Reading from the N-terminus, the 160-residue chain is SsrA-binding protein (160 aa).

It belongs to the SmpB family.

Its subcellular location is the cytoplasm. Functionally, required for rescue of stalled ribosomes mediated by trans-translation. Binds to transfer-messenger RNA (tmRNA), required for stable association of tmRNA with ribosomes. tmRNA and SmpB together mimic tRNA shape, replacing the anticodon stem-loop with SmpB. tmRNA is encoded by the ssrA gene; the 2 termini fold to resemble tRNA(Ala) and it encodes a 'tag peptide', a short internal open reading frame. During trans-translation Ala-aminoacylated tmRNA acts like a tRNA, entering the A-site of stalled ribosomes, displacing the stalled mRNA. The ribosome then switches to translate the ORF on the tmRNA; the nascent peptide is terminated with the 'tag peptide' encoded by the tmRNA and targeted for degradation. The ribosome is freed to recommence translation, which seems to be the essential function of trans-translation. This Actinobacillus succinogenes (strain ATCC 55618 / DSM 22257 / CCUG 43843 / 130Z) protein is SsrA-binding protein.